The following is a 256-amino-acid chain: EF-hand calcium-binding domain-containing protein 4A (256 aa).

Over residues 1–10 the composition is skewed to basic residues; that stretch reads MAHLGSRRRM. The interval 1-32 is disordered; it reads MAHLGSRRRMSPGLRTRIAHRKAHRTPPSPLI. 2 EF-hand domains span residues 41 to 69 and 71 to 106; these read KAHE…QNEL and LTPE…LLGV. Ca(2+) is bound by residues Asp-84, Ser-86, Asn-88, Tyr-90, and Glu-95. The stretch at 190-235 forms a coiled coil; the sequence is IRDVHHEKDTLEQALKRKETDHGREVRCLYEEMEQQIKIERERLLK.

It belongs to the EFCAB4 family.

This chain is EF-hand calcium-binding domain-containing protein 4A (cracr2b), found in Xenopus tropicalis (Western clawed frog).